The sequence spans 317 residues: Melanocyte-stimulating hormone receptor (317 aa).

The Extracellular segment spans residues 1–37; the sequence is MPVLGSQRRLLGSLNCTPPATFPLTLAPNRTGPQCLE. N29 is a glycosylation site (N-linked (GlcNAc...) asparagine). Residues 38–63 form a helical membrane-spanning segment; sequence VSIPDGLFLSLGLVSLVENVLVVAAI. Residues 64-72 lie on the Cytoplasmic side of the membrane; that stretch reads AKNRNLHSP. Residues 73–93 form a helical membrane-spanning segment; the sequence is MYYFICCLAMSDLLVSVSNVL. Over 94-118 the chain is Extracellular; sequence ETAVMLLLEAGALAAQAAVVQQLDN. A helical membrane pass occupies residues 119–140; that stretch reads VIDVLICGSMVSSLCFLGAIAV. Topologically, residues 141–163 are cytoplasmic; the sequence is DRYISIFYALRYHSVVTLPRAWR. Residues 164-183 traverse the membrane as a helical segment; the sequence is IIAAIWVASILTSLLFITYY. The Extracellular segment spans residues 184 to 191; it reads NHTVVLLC. The helical transmembrane segment at 192-211 threads the bilayer; sequence LVGFFIAMLALMAVLYVHML. Residues 212–240 are Cytoplasmic-facing; it reads ARACQHARGIARLQKRQRPIHQGFGLKGA. The helical transmembrane segment at 241 to 266 threads the bilayer; sequence ATLTILLGVFFLCWGPFFLHLSLIVL. Over 267-279 the chain is Extracellular; sequence CPQHPTCGCIFKN. A helical transmembrane segment spans residues 280–300; it reads FNLFLALIICNAIVDPLIYAF. Topologically, residues 301 to 317 are cytoplasmic; that stretch reads RSQELRKTLQEVLQCSW. A lipid anchor (S-palmitoyl cysteine) is attached at C315.

It belongs to the G-protein coupled receptor 1 family. Interacts with MGRN1, but does not undergo MGRN1-mediated ubiquitination; this interaction competes with GNAS-binding and thus inhibits agonist-induced cAMP production. Interacts with OPN3; the interaction results in a decrease in MC1R-mediated cAMP signaling and ultimately a decrease in melanin production in melanocytes.

It is found in the cell membrane. Its function is as follows. Receptor for MSH (alpha, beta and gamma) and ACTH. The activity of this receptor is mediated by G proteins which activate adenylate cyclase. Mediates melanogenesis, the production of eumelanin (black/brown) and phaeomelanin (red/yellow), via regulation of cAMP signaling in melanocytes. This Dama dama (Fallow deer) protein is Melanocyte-stimulating hormone receptor (MC1R).